The primary structure comprises 315 residues: MGDWNNSDAVEPIFILRGFPGLEYVHSWLSILFCLAYLVAFMGNVTILSVIWIESSLHQPMYYFISILAVNDLGMSLSTLPTMLAVLWLDAPEIQASACYAQLFFIHTFTFLESSVLLAMAFDRFVAICHPLHYPTILTNSVIGKIGLACLLRSLGVVLPTPLLLRHYHYCHGNALSHAFCLHQDVLRLSCTDARTNSIYGLCVVIATLGVDSIFILLSYVLILNTVLDIASREEQLKALNTCVSHICVVLIFFVPVIGVSMVHRFGKHLSPIVHILMADIYLLLPPVLNPIVYSVRTKQIRLGILHKFVLRRRF.

Residues 1-27 are Extracellular-facing; the sequence is MGDWNNSDAVEPIFILRGFPGLEYVHS. N-linked (GlcNAc...) asparagine glycosylation is present at N5. A helical transmembrane segment spans residues 28–48; sequence WLSILFCLAYLVAFMGNVTIL. The Cytoplasmic portion of the chain corresponds to 49–56; it reads SVIWIESS. The chain crosses the membrane as a helical span at residues 57–77; that stretch reads LHQPMYYFISILAVNDLGMSL. Residues 78–101 are Extracellular-facing; sequence STLPTMLAVLWLDAPEIQASACYA. The cysteines at positions 99 and 191 are disulfide-linked. The helical transmembrane segment at 102-122 threads the bilayer; it reads QLFFIHTFTFLESSVLLAMAF. The Cytoplasmic portion of the chain corresponds to 123 to 141; sequence DRFVAICHPLHYPTILTNS. The chain crosses the membrane as a helical span at residues 142-162; that stretch reads VIGKIGLACLLRSLGVVLPTP. Residues 163-198 lie on the Extracellular side of the membrane; that stretch reads LLLRHYHYCHGNALSHAFCLHQDVLRLSCTDARTNS. The helical transmembrane segment at 199–219 threads the bilayer; that stretch reads IYGLCVVIATLGVDSIFILLS. The Cytoplasmic segment spans residues 220 to 239; that stretch reads YVLILNTVLDIASREEQLKA. Residues 240–260 form a helical membrane-spanning segment; sequence LNTCVSHICVVLIFFVPVIGV. At 261-275 the chain is on the extracellular side; that stretch reads SMVHRFGKHLSPIVH. The helical transmembrane segment at 276–296 threads the bilayer; it reads ILMADIYLLLPPVLNPIVYSV. At 297 to 315 the chain is on the cytoplasmic side; that stretch reads RTKQIRLGILHKFVLRRRF.

This sequence belongs to the G-protein coupled receptor 1 family.

Its subcellular location is the cell membrane. Its function is as follows. Odorant receptor. The chain is Olfactory receptor 51L1 (OR51L1) from Homo sapiens (Human).